Reading from the N-terminus, the 929-residue chain is SCY1-like protein 2 (929 aa).

One can recognise a Protein kinase domain in the interval 32–327; that stretch reads FDVGRHIASG…ADQMTKIPFF (296 aa). Residues 443–479 form an HEAT repeat; the sequence is DEIKNSVLPMVYRALEAPSIQIQELCLNIIPTFANLI. Positions 661–701 form a coiled coil; that stretch reads ESENKEDGLQNKHKRASLTLEEKQKLAKEQEQAQKLKSQQP. A Phosphoserine modification is found at Ser677. The segment covering 684–694 has biased composition (basic and acidic residues); it reads QKLAKEQEQAQ. 2 disordered regions span residues 684–709 and 906–929; these read QKLAKEQEQAQKLKSQQPLKPQVHTP and NFAQPPTTMTNSSSASNDLKDLFG. Over residues 695-705 the composition is skewed to low complexity; that stretch reads KLKSQQPLKPQ. Positions 699–929 are necessary for interaction with AP2 complex and clathrin, interaction with clathrin is necessary for its targeting to the TGN and endosomal membranes; the sequence is QQPLKPQVHT…ASNDLKDLFG (231 aa). Phosphothreonine is present on Thr708. Over residues 912–922 the composition is skewed to polar residues; the sequence is TTMTNSSSASN.

This sequence belongs to the protein kinase superfamily. Interacts with clathrin and AP2B1; the interaction mediates the association with the AP-2 complex. In terms of processing, could autophosphorylate in presence of poly-L-lysine.

The protein resides in the cytoplasmic vesicle. The protein localises to the clathrin-coated vesicle. It localises to the golgi apparatus. It is found in the trans-Golgi network membrane. Its subcellular location is the endosome membrane. Functionally, component of the AP2-containing clathrin coat that may regulate clathrin-dependent trafficking at plasma membrane, TGN and endosomal system. A possible serine/threonine-protein kinase toward the beta2-subunit of the plasma membrane adapter complex AP2 and other proteins in presence of poly-L-lysine has not been confirmed. By regulating the expression of excitatory receptors at synapses, plays an essential role in neuronal function and signaling and in brain development. This Homo sapiens (Human) protein is SCY1-like protein 2.